Consider the following 377-residue polypeptide: Protein FAM199X-B (377 aa).

Residues 240–254 show a composition bias toward basic and acidic residues; sequence KEHSPRQRCTRESWK. A disordered region spans residues 240-350; that stretch reads KEHSPRQRCT…EQRQARKERI (111 aa). Residues 256–301 are compositionally biased toward low complexity; the sequence is TSYSTASTSGVSGASVSSSSASMVSTASSTGSSGGNSASNSSANMS. Over residues 319 to 338 the composition is skewed to basic residues; sequence DSKKRSKQRKLQQKALRKRQ. Positions 321 to 349 form a coiled coil; it reads KKRSKQRKLQQKALRKRQLKEQRQARKER. Residues 339–350 are compositionally biased toward basic and acidic residues; sequence LKEQRQARKERI.

This sequence belongs to the FAM199 family.

The sequence is that of Protein FAM199X-B (fam199x-b) from Xenopus laevis (African clawed frog).